Here is a 359-residue protein sequence, read N- to C-terminus: RuBisCO accumulation factor 1 (359 aa).

Residues 12 to 195 (LSPEETDALF…RQKIEQLLSD (184 aa)) form an N-terminal alpha-helix region. Positions 219 to 345 (PLLIPVAGSL…VLLVMRPKKI (127 aa)) are C-terminal beta-sheet.

Belongs to the RAF family. In terms of assembly, homodimer. Forms an RbcL(8)-Raf1(8) complex. Forms complexes of many stoichiometries with RbcL with and without RbcS. RbcX and Raf1 can bind simultaneously to RbcL.

Its subcellular location is the cytoplasm. A major RuBisCO chaperone. Acts after GroEL-GroES chaperonin to fold and/or assemble the large subunit of RuBisCO (ccbL, rbcL). Cooperates with RbcX in RbcL folding, plays the major role in assembly of dimers into RbcL(8)-Raf1(8) intermediate complexes. RbcS replaces Raf1, leading to holoenzyme formation. Its function is as follows. Raf1 and RbcX are probably functionally redundant; it has been suggested they may cooperate. This is RuBisCO accumulation factor 1 from Picosynechococcus sp. (strain ATCC 27264 / PCC 7002 / PR-6) (Agmenellum quadruplicatum).